We begin with the raw amino-acid sequence, 443 residues long: Phosphoglucosamine mutase (443 aa).

Residue serine 101 is the Phosphoserine intermediate of the active site. Serine 101, aspartate 240, aspartate 242, and aspartate 244 together coordinate Mg(2+). The residue at position 101 (serine 101) is a Phosphoserine.

The protein belongs to the phosphohexose mutase family. The cofactor is Mg(2+). Post-translationally, activated by phosphorylation.

It carries out the reaction alpha-D-glucosamine 1-phosphate = D-glucosamine 6-phosphate. In terms of biological role, catalyzes the conversion of glucosamine-6-phosphate to glucosamine-1-phosphate. This Psychromonas ingrahamii (strain DSM 17664 / CCUG 51855 / 37) protein is Phosphoglucosamine mutase.